The chain runs to 195 residues: dTTP/UTP pyrophosphatase (195 aa).

Aspartate 73 serves as the catalytic Proton acceptor.

The protein belongs to the Maf family. YhdE subfamily. It depends on a divalent metal cation as a cofactor.

Its subcellular location is the cytoplasm. The enzyme catalyses dTTP + H2O = dTMP + diphosphate + H(+). It carries out the reaction UTP + H2O = UMP + diphosphate + H(+). Its function is as follows. Nucleoside triphosphate pyrophosphatase that hydrolyzes dTTP and UTP. May have a dual role in cell division arrest and in preventing the incorporation of modified nucleotides into cellular nucleic acids. The polypeptide is dTTP/UTP pyrophosphatase (Desulfotalea psychrophila (strain LSv54 / DSM 12343)).